The following is a 246-amino-acid chain: uncharacterized protein (246 aa).

This is an uncharacterized protein from Methanocaldococcus jannaschii (strain ATCC 43067 / DSM 2661 / JAL-1 / JCM 10045 / NBRC 100440) (Methanococcus jannaschii).